The following is a 424-amino-acid chain: Glutamyl-tRNA reductase (424 aa).

Substrate-binding positions include 49-52 (TCNR), Ser107, 112-114 (EPQ), and Gln118. Residue Cys50 is the Nucleophile of the active site. NADP(+) is bound at residue 187–192 (GAGETI).

The protein belongs to the glutamyl-tRNA reductase family. In terms of assembly, homodimer.

It catalyses the reaction (S)-4-amino-5-oxopentanoate + tRNA(Glu) + NADP(+) = L-glutamyl-tRNA(Glu) + NADPH + H(+). Its pathway is porphyrin-containing compound metabolism; protoporphyrin-IX biosynthesis; 5-aminolevulinate from L-glutamyl-tRNA(Glu): step 1/2. Functionally, catalyzes the NADPH-dependent reduction of glutamyl-tRNA(Glu) to glutamate 1-semialdehyde (GSA). The sequence is that of Glutamyl-tRNA reductase from Chromohalobacter salexigens (strain ATCC BAA-138 / DSM 3043 / CIP 106854 / NCIMB 13768 / 1H11).